Here is a 163-residue protein sequence, read N- to C-terminus: Phospholipase A2 homolog 3 (163 aa).

The first 43 residues, 1 to 43, serve as a signal peptide directing secretion; it reads MARGGSFSRLRLRAGVVVAAAAAALLLFAVVAPPAAALNIGLQ. Intrachain disulfides connect C55–C83, C59–C89, C64–C137, C76–C96, C95–C121, and C102–C114. The Ca(2+) site is built by Y75, G77, and Y80. H99 is a catalytic residue. D100 is a Ca(2+) binding site.

Belongs to the phospholipase A2 family. Ca(2+) serves as cofactor.

The protein resides in the secreted. The catalysed reaction is a 1,2-diacyl-sn-glycero-3-phosphocholine + H2O = a 1-acyl-sn-glycero-3-phosphocholine + a fatty acid + H(+). Its activity is regulated as follows. Inhibited by EGTA. In terms of biological role, PA2 catalyzes the calcium-dependent hydrolysis of the 2-acyl groups in 3-sn-phosphoglycerides. Releases lysophospholipids (LPLs) and free fatty acids (FFAs) from membrane phospholipids in response to hormones and other external stimuli. This is Phospholipase A2 homolog 3 (PLA2-III) from Oryza sativa subsp. japonica (Rice).